We begin with the raw amino-acid sequence, 95 residues long: MSVDAATVRKIASLARIAVTDGDVEAMVPELNNILGWIEQLGEVDTDGVAPLAAVIPNHQRLRDDVVTDGNIRDKVLANAPQAEHGFFAVPKVIE.

The protein belongs to the GatC family. Heterotrimer of A, B and C subunits.

It catalyses the reaction L-glutamyl-tRNA(Gln) + L-glutamine + ATP + H2O = L-glutaminyl-tRNA(Gln) + L-glutamate + ADP + phosphate + H(+). It carries out the reaction L-aspartyl-tRNA(Asn) + L-glutamine + ATP + H2O = L-asparaginyl-tRNA(Asn) + L-glutamate + ADP + phosphate + 2 H(+). Its function is as follows. Allows the formation of correctly charged Asn-tRNA(Asn) or Gln-tRNA(Gln) through the transamidation of misacylated Asp-tRNA(Asn) or Glu-tRNA(Gln) in organisms which lack either or both of asparaginyl-tRNA or glutaminyl-tRNA synthetases. The reaction takes place in the presence of glutamine and ATP through an activated phospho-Asp-tRNA(Asn) or phospho-Glu-tRNA(Gln). In Rhizorhabdus wittichii (strain DSM 6014 / CCUG 31198 / JCM 15750 / NBRC 105917 / EY 4224 / RW1) (Sphingomonas wittichii), this protein is Aspartyl/glutamyl-tRNA(Asn/Gln) amidotransferase subunit C.